The chain runs to 348 residues: NADH-ubiquinone oxidoreductase chain 2 (348 aa).

The next 9 helical transmembrane spans lie at 13–33 (VITGTLITMLSSHWFLAWAGL), 60–80 (FLAQSTASMILMMAIISNNLL), 96–116 (PLAMTIALTMKLGMAPFHFWV), 124–144 (PLTSGLLLLTWQKLAPISIMY), 150–170 (INTHILLILSTLSIAVGSWGG), 200–220 (TITTLYLITYITLTTTMFLTL), 241–261 (LMPLMTSTLLSLGGLPPLTGF), 278–298 (IIPTIMITMTLLNLYFYMRLI), and 325–345 (LFIPALITISTLLLPISPLIL).

This sequence belongs to the complex I subunit 2 family. As to quaternary structure, core subunit of respiratory chain NADH dehydrogenase (Complex I) which is composed of 45 different subunits. Interacts with TMEM242.

Its subcellular location is the mitochondrion inner membrane. The enzyme catalyses a ubiquinone + NADH + 5 H(+)(in) = a ubiquinol + NAD(+) + 4 H(+)(out). Core subunit of the mitochondrial membrane respiratory chain NADH dehydrogenase (Complex I) which catalyzes electron transfer from NADH through the respiratory chain, using ubiquinone as an electron acceptor. Essential for the catalytic activity and assembly of complex I. The chain is NADH-ubiquinone oxidoreductase chain 2 from Papio hamadryas (Hamadryas baboon).